The chain runs to 689 residues: Glycine--tRNA ligase beta subunit (689 aa).

Belongs to the class-II aminoacyl-tRNA synthetase family. In terms of assembly, tetramer of two alpha and two beta subunits.

It localises to the cytoplasm. It carries out the reaction tRNA(Gly) + glycine + ATP = glycyl-tRNA(Gly) + AMP + diphosphate. The chain is Glycine--tRNA ligase beta subunit from Acinetobacter baumannii (strain ATCC 17978 / DSM 105126 / CIP 53.77 / LMG 1025 / NCDC KC755 / 5377).